Consider the following 351-residue polypeptide: Holliday junction branch migration complex subunit RuvB (351 aa).

A large ATPase domain (RuvB-L) region spans residues 1–186 (MDEKIETRLI…FGIVQRLEFY (186 aa)). ATP contacts are provided by residues I25, R26, G67, K70, T71, T72, 133 to 135 (EDF), R176, Y186, and R223. T71 serves as a coordination point for Mg(2+). Positions 187–257 (RIPDLIHIVK…IAKEALDLLN (71 aa)) are small ATPAse domain (RuvB-S). The head domain (RuvB-H) stretch occupies residues 260-351 (IRGLDVMDRK…ENFDLLGKVE (92 aa)). DNA is bound by residues R296, R315, and R320.

Belongs to the RuvB family. Homohexamer. Forms an RuvA(8)-RuvB(12)-Holliday junction (HJ) complex. HJ DNA is sandwiched between 2 RuvA tetramers; dsDNA enters through RuvA and exits via RuvB. An RuvB hexamer assembles on each DNA strand where it exits the tetramer. Each RuvB hexamer is contacted by two RuvA subunits (via domain III) on 2 adjacent RuvB subunits; this complex drives branch migration. In the full resolvosome a probable DNA-RuvA(4)-RuvB(12)-RuvC(2) complex forms which resolves the HJ.

It localises to the cytoplasm. The catalysed reaction is ATP + H2O = ADP + phosphate + H(+). In terms of biological role, the RuvA-RuvB-RuvC complex processes Holliday junction (HJ) DNA during genetic recombination and DNA repair, while the RuvA-RuvB complex plays an important role in the rescue of blocked DNA replication forks via replication fork reversal (RFR). RuvA specifically binds to HJ cruciform DNA, conferring on it an open structure. The RuvB hexamer acts as an ATP-dependent pump, pulling dsDNA into and through the RuvAB complex. RuvB forms 2 homohexamers on either side of HJ DNA bound by 1 or 2 RuvA tetramers; 4 subunits per hexamer contact DNA at a time. Coordinated motions by a converter formed by DNA-disengaged RuvB subunits stimulates ATP hydrolysis and nucleotide exchange. Immobilization of the converter enables RuvB to convert the ATP-contained energy into a lever motion, pulling 2 nucleotides of DNA out of the RuvA tetramer per ATP hydrolyzed, thus driving DNA branch migration. The RuvB motors rotate together with the DNA substrate, which together with the progressing nucleotide cycle form the mechanistic basis for DNA recombination by continuous HJ branch migration. Branch migration allows RuvC to scan DNA until it finds its consensus sequence, where it cleaves and resolves cruciform DNA. The chain is Holliday junction branch migration complex subunit RuvB from Coxiella burnetii (strain RSA 331 / Henzerling II).